A 419-amino-acid chain; its full sequence is UDP-N-acetylglucosamine 1-carboxyvinyltransferase (419 aa).

22–23 (KN) is a binding site for phosphoenolpyruvate. Residue Arg-91 participates in UDP-N-acetyl-alpha-D-glucosamine binding. Cys-115 (proton donor) is an active-site residue. Position 115 is a 2-(S-cysteinyl)pyruvic acid O-phosphothioketal (Cys-115). UDP-N-acetyl-alpha-D-glucosamine-binding positions include 120 to 124 (RPVDL), 160 to 163 (KVSV), Asp-305, and Val-327.

The protein belongs to the EPSP synthase family. MurA subfamily.

The protein localises to the cytoplasm. It catalyses the reaction phosphoenolpyruvate + UDP-N-acetyl-alpha-D-glucosamine = UDP-N-acetyl-3-O-(1-carboxyvinyl)-alpha-D-glucosamine + phosphate. It functions in the pathway cell wall biogenesis; peptidoglycan biosynthesis. In terms of biological role, cell wall formation. Adds enolpyruvyl to UDP-N-acetylglucosamine. This is UDP-N-acetylglucosamine 1-carboxyvinyltransferase from Salmonella schwarzengrund (strain CVM19633).